A 125-amino-acid polypeptide reads, in one-letter code: Subtelomeric hrmA-associated cluster protein cgnA (125 aa).

G-Q-I/R/S repeat units follow at residues 11–13 (GQI), 14–16 (GPI), 17–19 (GQR), 20–22 (GQS), 23–25 (GQR), 26–28 (GQS), 29–31 (GQR), 32–34 (GQS), 35–37 (GQI), 38–40 (GQS), 41–43 (GQS), 44–46 (GQS), 47–49 (GQS), 50–52 (GQS), 53–55 (GQI), 56–58 (GQI), 59–61 (GQI), 62–64 (GQI), 65–67 (GQI), 68–70 (GQI), 71–73 (GQI), 74–76 (GQI), and 77–79 (GQA). The interval 11–79 (GQIGPIGQRG…IGQIGQIGQA (69 aa)) is 23 X 3 AA approximate tandem repeats of G-Q-I/R/S. The tract at residues 15 to 57 (PIGQRGQSGQRGQSGQRGQSGQIGQSGQSGQSGQSGQSGQIGQ) is disordered.

It is found in the secreted. Hypoxia responsive morphology factor that modulates the expression of the subtelomeric hrmA-associated cluster (HAC) containing genes that alter the hyphal surface (such as reduced total chitin or increased beta-glucan exposure) and perturb inter-hyphal interactions within the developing biofilms, resulting in a loss of vertically aligned polarized growing filaments. Consequently, this hypoxia-typic morphotype (called H-MORPH) with altered biofilm architecture leads to increased hypoxia fitness, increased host inflammation, rapid disease progression, and mortality in a murine model of invasive aspergillosis. GcnA is directly involved in the reduction total surface chitin and the increase beta-glucan exposure, and mediates the detachment of the extracellular matrix and especially of its component galactosaminogalactan (GAG). This is Subtelomeric hrmA-associated cluster protein cgnA from Aspergillus fumigatus (strain CBS 144.89 / FGSC A1163 / CEA10) (Neosartorya fumigata).